The chain runs to 466 residues: MISIAFYKGKKVALFGLGKSGLATAQALISGGADVVAWDDNPSGVQAAHRENIPARNLQYENWSEFVALILAPGVPLTYPQPHWVVDKARQANIEIIGDIELFVRARNHFLQQYGFCDEDVPFIAITGTNGKSTTTALLAHLLEQMGYDVQMGGNIGTAILTLKPFVKKRIYVIECSSFQIDLAPSLQPTIGLLLNLTPDHIDRHGSFAHYVNAKKNLVTGASQAFISVDDAACQVLYRQLLHEGHHVEAVSKEHFVENGFYADGTQLFSVCQGRRHMLADLASMAALRGSHNAQNALMALATLQALKITDPHMNKHLASYQGLAHRMQQVRKMGSVLFINDSKATNAEASAPALAAFNNIFWIVGGQAKEAGIVSLRGFFHKIRKAYLIGAAAEEFAGVIGSSFPFSMSLTLENAVHEAAVDAMRCKAKEVVVLFSPACASYDQFKNYEVRGEAFISFVMQLKET.

An ATP-binding site is contributed by G128–T134.

The protein belongs to the MurCDEF family.

The protein localises to the cytoplasm. It carries out the reaction UDP-N-acetyl-alpha-D-muramoyl-L-alanine + D-glutamate + ATP = UDP-N-acetyl-alpha-D-muramoyl-L-alanyl-D-glutamate + ADP + phosphate + H(+). The protein operates within cell wall biogenesis; peptidoglycan biosynthesis. Functionally, cell wall formation. Catalyzes the addition of glutamate to the nucleotide precursor UDP-N-acetylmuramoyl-L-alanine (UMA). The sequence is that of UDP-N-acetylmuramoylalanine--D-glutamate ligase from Bartonella henselae (strain ATCC 49882 / DSM 28221 / CCUG 30454 / Houston 1) (Rochalimaea henselae).